Here is a 457-residue protein sequence, read N- to C-terminus: tRNA-2-methylthio-N(6)-dimethylallyladenosine synthase (457 aa).

Positions 3-120 (KKVYVKTFGC…LPQMIDKRRE (118 aa)) constitute an MTTase N-terminal domain. The [4Fe-4S] cluster site is built by Cys-12, Cys-49, Cys-83, Cys-157, Cys-161, and Cys-164. The region spanning 143-377 (RVDGPSAFVS…QATIEENVQR (235 aa)) is the Radical SAM core domain. In terms of domain architecture, TRAM spans 380 to 447 (DSMVGKIERI…PHSLRGELVL (68 aa)).

The protein belongs to the methylthiotransferase family. MiaB subfamily. In terms of assembly, monomer. It depends on [4Fe-4S] cluster as a cofactor.

Its subcellular location is the cytoplasm. The enzyme catalyses N(6)-dimethylallyladenosine(37) in tRNA + (sulfur carrier)-SH + AH2 + 2 S-adenosyl-L-methionine = 2-methylsulfanyl-N(6)-dimethylallyladenosine(37) in tRNA + (sulfur carrier)-H + 5'-deoxyadenosine + L-methionine + A + S-adenosyl-L-homocysteine + 2 H(+). Catalyzes the methylthiolation of N6-(dimethylallyl)adenosine (i(6)A), leading to the formation of 2-methylthio-N6-(dimethylallyl)adenosine (ms(2)i(6)A) at position 37 in tRNAs that read codons beginning with uridine. This Paraburkholderia phytofirmans (strain DSM 17436 / LMG 22146 / PsJN) (Burkholderia phytofirmans) protein is tRNA-2-methylthio-N(6)-dimethylallyladenosine synthase.